We begin with the raw amino-acid sequence, 611 residues long: Depudecin biosynthesis cluster-specific transcription activator DEP6 (611 aa).

The zn(2)-C6 fungal-type DNA-binding region spans 17–44; that stretch reads CEICRQRKVRCDRALPRCRRCERLNQAC. The interval 76–125 is disordered; sequence DAPRGPASSMSSQSRSDSAAPAASRVPSVSASVPNSAATNPMDMVGTRSS. Residues 78-113 are compositionally biased toward low complexity; it reads PRGPASSMSSQSRSDSAAPAASRVPSVSASVPNSAA.

Its subcellular location is the nucleus. Functionally, transcription factor that positively regulates the expression of the gene cluster that mediates the biosynthesis of depudecin, a highly oxidized eleven-carbon linear polyketide that acts as a histone deacetylase (HDAC) inhibitor and makes a small contribution to pathogenesis. This Fusarium langsethiae protein is Depudecin biosynthesis cluster-specific transcription activator DEP6.